The primary structure comprises 167 residues: Photosystem II extrinsic protein V (167 aa).

Positions methionine 1–alanine 30 are cleaved as a signal peptide. Residues cysteine 67, cysteine 70, histidine 71, and histidine 122 each contribute to the heme c site.

This sequence belongs to the cytochrome c family. PsbV subfamily. PSII is composed of 1 copy each of membrane proteins PsbA, PsbB, PsbC, PsbD, PsbE, PsbF, PsbH, PsbI, PsbJ, PsbK, PsbL, PsbM, PsbT, PsbX, PsbY, PsbZ, Psb30/Ycf12, peripheral proteins PsbO, CyanoQ (PsbQ), PsbU, PsbV and a large number of cofactors. It forms dimeric complexes. Heme c is required as a cofactor.

The protein resides in the cellular thylakoid membrane. One of the extrinsic, lumenal subunits of photosystem II (PSII). PSII is a light-driven water plastoquinone oxidoreductase, using light energy to abstract electrons from H(2)O, generating a proton gradient subsequently used for ATP formation. The extrinsic proteins stabilize the structure of photosystem II oxygen-evolving complex (OEC), the ion environment of oxygen evolution and protect the OEC against heat-induced inactivation. Low-potential cytochrome c that plays a role in the OEC of PSII. The protein is Photosystem II extrinsic protein V of Synechococcus elongatus (strain ATCC 33912 / PCC 7942 / FACHB-805) (Anacystis nidulans R2).